A 315-amino-acid chain; its full sequence is DNA-directed RNA polymerase subunit alpha (315 aa).

An alpha N-terminal domain (alpha-NTD) region spans residues 1–228; that stretch reads MLEIEKPKIE…EHLRLFIGLT (228 aa). Residues 245–315 form an alpha C-terminal domain (alpha-CTD) region; that stretch reads KDKILEMTIE…LGLGFRKADD (71 aa).

It belongs to the RNA polymerase alpha chain family. Homodimer. The RNAP catalytic core consists of 2 alpha, 1 beta, 1 beta' and 1 omega subunit. When a sigma factor is associated with the core the holoenzyme is formed, which can initiate transcription.

The enzyme catalyses RNA(n) + a ribonucleoside 5'-triphosphate = RNA(n+1) + diphosphate. DNA-dependent RNA polymerase catalyzes the transcription of DNA into RNA using the four ribonucleoside triphosphates as substrates. The chain is DNA-directed RNA polymerase subunit alpha from Desulfitobacterium hafniense (strain DSM 10664 / DCB-2).